Here is a 278-residue protein sequence, read N- to C-terminus: Elongation factor Ts 1, mitochondrial (278 aa).

This sequence belongs to the EF-Ts family.

It is found in the mitochondrion. Functionally, associates with the EF-Tu.GDP complex and induces the exchange of GDP to GTP. It remains bound to the aminoacyl-tRNA.EF-Tu.GTP complex up to the GTP hydrolysis stage on the ribosome. The chain is Elongation factor Ts 1, mitochondrial from Trypanosoma cruzi (strain CL Brener).